We begin with the raw amino-acid sequence, 412 residues long: D-xylonate dehydratase (412 aa).

As to quaternary structure, homooctamer.

The enzyme catalyses D-xylonate = 2-dehydro-3-deoxy-D-arabinonate + H2O. NADP-dependent D-xylose dehydrogenase involved in the degradation of D-xylose, a major component of hemicelluloses such as xylan. Catalyzes the third reaction in the xylose utilization pathway through dehydratation of D-xylonate into 2-dehydro-3-deoxy-D-xylonate. This is D-xylonate dehydratase from Haloferax volcanii (strain ATCC 29605 / DSM 3757 / JCM 8879 / NBRC 14742 / NCIMB 2012 / VKM B-1768 / DS2) (Halobacterium volcanii).